Here is a 125-residue protein sequence, read N- to C-terminus: uncharacterized protein (125 aa).

4 helical membrane-spanning segments follow: residues 9–29 (IANA…TLTG), 33–53 (GEKT…NMVV), 56–76 (IVQV…TLVV), and 100–120 (FWTA…LNAF).

It is found in the cell membrane. This is an uncharacterized protein from Streptomyces coelicolor (strain ATCC BAA-471 / A3(2) / M145).